The primary structure comprises 122 residues: UPF0231 protein VSAL_I2591 (122 aa).

Belongs to the UPF0231 family.

The chain is UPF0231 protein VSAL_I2591 from Aliivibrio salmonicida (strain LFI1238) (Vibrio salmonicida (strain LFI1238)).